The primary structure comprises 197 residues: Guanylate kinase (197 aa).

Residues 6-191 enclose the Guanylate kinase-like domain; it reads SKLIILSGPS…CVAQIEKIIS (186 aa). 13 to 20 serves as a coordination point for ATP; sequence GPSGVGKG.

It belongs to the guanylate kinase family.

Its subcellular location is the cytoplasm. It carries out the reaction GMP + ATP = GDP + ADP. Its function is as follows. Essential for recycling GMP and indirectly, cGMP. This is Guanylate kinase from Mesomycoplasma hyopneumoniae (strain 7448) (Mycoplasma hyopneumoniae).